The chain runs to 545 residues: CTP synthase (545 aa).

Positions 2–266 are amidoligase domain; it reads TTNYIFVTGG…DDYICKRFSL (265 aa). Ser14 lines the CTP pocket. Ser14 is a binding site for UTP. Residues 15-20 and Asp72 contribute to the ATP site; that span reads SLGKGI. Mg(2+)-binding residues include Asp72 and Glu140. CTP is bound by residues 147-149, 187-192, and Lys223; these read DIE and KTKPTQ. UTP contacts are provided by residues 187 to 192 and Lys223; that span reads KTKPTQ. 239–241 contacts ATP; that stretch reads KDV. The Glutamine amidotransferase type-1 domain maps to 291-542; the sequence is TIGMVGKYIE…VKAANEHQKR (252 aa). Gly352 provides a ligand contact to L-glutamine. The active-site Nucleophile; for glutamine hydrolysis is the Cys379. Residues 380-383, Glu403, and Arg470 each bind L-glutamine; that span reads LGMQ. Active-site residues include His515 and Glu517.

This sequence belongs to the CTP synthase family. Homotetramer.

The catalysed reaction is UTP + L-glutamine + ATP + H2O = CTP + L-glutamate + ADP + phosphate + 2 H(+). It catalyses the reaction L-glutamine + H2O = L-glutamate + NH4(+). It carries out the reaction UTP + NH4(+) + ATP = CTP + ADP + phosphate + 2 H(+). It functions in the pathway pyrimidine metabolism; CTP biosynthesis via de novo pathway; CTP from UDP: step 2/2. With respect to regulation, allosterically activated by GTP, when glutamine is the substrate; GTP has no effect on the reaction when ammonia is the substrate. The allosteric effector GTP functions by stabilizing the protein conformation that binds the tetrahedral intermediate(s) formed during glutamine hydrolysis. Inhibited by the product CTP, via allosteric rather than competitive inhibition. Functionally, catalyzes the ATP-dependent amination of UTP to CTP with either L-glutamine or ammonia as the source of nitrogen. Regulates intracellular CTP levels through interactions with the four ribonucleotide triphosphates. The chain is CTP synthase from Salmonella typhi.